Here is a 964-residue protein sequence, read N- to C-terminus: Isoleucine--tRNA ligase (964 aa).

Residues 66-76 carry the 'HIGH' region motif; sequence PYANGDIHIGH. Glu-596 contacts L-isoleucyl-5'-AMP. Positions 637–641 match the 'KMSKS' region motif; the sequence is KMSKS. Position 640 (Lys-640) interacts with ATP. 4 residues coordinate Zn(2+): Cys-927, Cys-930, Cys-947, and Cys-950.

Belongs to the class-I aminoacyl-tRNA synthetase family. IleS type 1 subfamily. Monomer. The cofactor is Zn(2+).

Its subcellular location is the cytoplasm. It catalyses the reaction tRNA(Ile) + L-isoleucine + ATP = L-isoleucyl-tRNA(Ile) + AMP + diphosphate. In terms of biological role, catalyzes the attachment of isoleucine to tRNA(Ile). As IleRS can inadvertently accommodate and process structurally similar amino acids such as valine, to avoid such errors it has two additional distinct tRNA(Ile)-dependent editing activities. One activity is designated as 'pretransfer' editing and involves the hydrolysis of activated Val-AMP. The other activity is designated 'posttransfer' editing and involves deacylation of mischarged Val-tRNA(Ile). The protein is Isoleucine--tRNA ligase of Cupriavidus necator (strain ATCC 17699 / DSM 428 / KCTC 22496 / NCIMB 10442 / H16 / Stanier 337) (Ralstonia eutropha).